We begin with the raw amino-acid sequence, 459 residues long: WPP domain-interacting protein 3 (459 aa).

Positions 1-17 (MNESVPDSVEDNGNSVP) are enriched in polar residues. The tract at residues 1-78 (MNESVPDSVE…GPVRDEAAPV (78 aa)) is disordered. Basic residues predominate over residues 52 to 66 (STRKGFGLKKWRRIK). 2 short sequence motifs (nuclear localization signal) span residues 60–61 (KK) and 63–64 (RR). Residues 67-78 (RDGPVRDEAAPV) show a composition bias toward basic and acidic residues. Residues 86 to 87 (KR) carry the Nuclear localization signal 3 motif. 2 disordered regions span residues 240–266 (KEEV…NNNH) and 308–330 (TDEL…TSSG). Basic and acidic residues predominate over residues 251–266 (NGNKEDDGESKKNNNH). Residues 308-319 (TDELSSDQPSHQ) are compositionally biased toward polar residues. A coiled-coil region spans residues 331 to 375 (SKALILKEKVKLLEHKLEEARAALEAKEARIQELENSKIESELEC). The KASH domain maps to 426 to 459 (KLGFYILTQLILLVSILRFLVLQFSPASRLVIPT). A helical membrane pass occupies residues 427–447 (LGFYILTQLILLVSILRFLVL).

As to quaternary structure, component of Ran complexes at least composed of WIT1 or WIT2, RANGAP1 or RANGAP2, and WIP1 or WIP2 or WIP3. Interacts with RANGAP1, WPP1/MAF1, and WPP2/MAF2. Interacts with SUN1 and SUN2. Core component of the LINC complex which is composed of inner nuclear membrane SUN domain-containing proteins coupled to outer nuclear membrane WIP and WIT proteins. The LINC complex also involves nucleoskeletal proteins CRWN/LINC and possibly KAKU4 and the cytoskeletal myosin KAKU1. Interacts with WIT2. As to expression, expressed in seedlings, roots, stems, leaves, and flowers.

Its subcellular location is the nucleus envelope. The protein resides in the nucleus membrane. Functionally, mediates and enhances the nuclear envelope docking of RANGAP proteins mediated by WIT1 and WIT2 in the undifferentiated cells of root tips. As component of the SUN-WIP-WIT2-KAKU1 complex, mediates the transfer of cytoplasmic forces to the nuclear envelope (NE), leading to nuclear shape changes. The chain is WPP domain-interacting protein 3 (WIP3) from Arabidopsis thaliana (Mouse-ear cress).